We begin with the raw amino-acid sequence, 309 residues long: NAD kinase (309 aa).

The active-site Proton acceptor is D89. NAD(+) contacts are provided by residues 89-90 (DG), 163-164 (NE), H174, R191, D193, and 204-209 (TAYSLS).

The protein belongs to the NAD kinase family. It depends on a divalent metal cation as a cofactor.

It localises to the cytoplasm. The enzyme catalyses NAD(+) + ATP = ADP + NADP(+) + H(+). Functionally, involved in the regulation of the intracellular balance of NAD and NADP, and is a key enzyme in the biosynthesis of NADP. Catalyzes specifically the phosphorylation on 2'-hydroxyl of the adenosine moiety of NAD to yield NADP. This Shewanella denitrificans (strain OS217 / ATCC BAA-1090 / DSM 15013) protein is NAD kinase.